The primary structure comprises 294 residues: 4-hydroxy-tetrahydrodipicolinate synthase (294 aa).

Position 49 (threonine 49) interacts with pyruvate. The active-site Proton donor/acceptor is the tyrosine 136. Lysine 164 (schiff-base intermediate with substrate) is an active-site residue. Isoleucine 207 is a pyruvate binding site.

This sequence belongs to the DapA family. As to quaternary structure, homotetramer; dimer of dimers.

The protein localises to the cytoplasm. The catalysed reaction is L-aspartate 4-semialdehyde + pyruvate = (2S,4S)-4-hydroxy-2,3,4,5-tetrahydrodipicolinate + H2O + H(+). It functions in the pathway amino-acid biosynthesis; L-lysine biosynthesis via DAP pathway; (S)-tetrahydrodipicolinate from L-aspartate: step 3/4. Its function is as follows. Catalyzes the condensation of (S)-aspartate-beta-semialdehyde [(S)-ASA] and pyruvate to 4-hydroxy-tetrahydrodipicolinate (HTPA). The polypeptide is 4-hydroxy-tetrahydrodipicolinate synthase (Natronomonas pharaonis (strain ATCC 35678 / DSM 2160 / CIP 103997 / JCM 8858 / NBRC 14720 / NCIMB 2260 / Gabara) (Halobacterium pharaonis)).